The primary structure comprises 1138 residues: Phosphatidylserine decarboxylase proenzyme 2 (1138 aa).

Residues 1–122 (MRIIKGRKRG…SNSGLSSHSH (122 aa)) enclose the C2 1 domain. 3 disordered regions span residues 90–166 (TGAP…PGST), 269–305 (MRSSSSLPPPLEDMLSNSSAVSGNEIRREKPYSDTDL), and 413–448 (AVSENDITSVDDEESENQQESDEEFDIYNEDEREDS). Residues 98–121 (SRPRTTTANTSSSTLSNSGLSSHS) are compositionally biased toward low complexity. Over residues 125–135 (RNLNVTSKGNQ) the composition is skewed to polar residues. Over residues 136–166 (TSTSINSVSSSATPAPSHSSSSLSTTGPGST) the composition is skewed to low complexity. Over residues 293–305 (EIRREKPYSDTDL) the composition is skewed to basic and acidic residues. Acidic residues predominate over residues 421 to 448 (SVDDEESENQQESDEEFDIYNEDEREDS). One can recognise a C2 2 domain in the interval 478–600 (RRAKSNFFIS…QQQQHENEWI (123 aa)). The Ca(2+) site is built by Asp571, Ser574, and Asp577. Residues Asp899, His956, and Ser1043 each act as charge relay system; for autoendoproteolytic cleavage activity in the active site. Ser1043 functions as the Schiff-base intermediate with substrate; via pyruvic acid; for decarboxylase activity in the catalytic mechanism. A Pyruvic acid (Ser); by autocatalysis modification is found at Ser1043.

Belongs to the phosphatidylserine decarboxylase family. PSD-B subfamily. Eukaryotic type II sub-subfamily. As to quaternary structure, heterodimer of a large membrane-associated beta subunit and a small pyruvoyl-containing alpha subunit. Interacts with pstB2/PDR17. This interaction may be a means to structurally tether the donor membrane (ER) harboring PstB2/PDR17 to acceptor membranes (Golgi/endosomes) harboring PSD2 during PtdSer transport to the site of PtdEtn synthesis. The cofactor is pyruvate. Requires Ca(2+) as cofactor. Post-translationally, is synthesized initially as an inactive proenzyme. Formation of the active enzyme involves a self-maturation process in which the active site pyruvoyl group is generated from an internal serine residue via an autocatalytic post-translational modification. Two non-identical subunits are generated from the proenzyme in this reaction, and the pyruvate is formed at the N-terminus of the alpha chain, which is derived from the carboxyl end of the proenzyme. The autoendoproteolytic cleavage occurs by a canonical serine protease mechanism, in which the side chain hydroxyl group of the serine supplies its oxygen atom to form the C-terminus of the beta chain, while the remainder of the serine residue undergoes an oxidative deamination to produce ammonia and the pyruvoyl prosthetic group on the alpha chain. During this reaction, the Ser that is part of the protease active site of the proenzyme becomes the pyruvoyl prosthetic group, which constitutes an essential element of the active site of the mature decarboxylase.

The protein localises to the golgi apparatus membrane. It localises to the endosome membrane. It catalyses the reaction a 1,2-diacyl-sn-glycero-3-phospho-L-serine + H(+) = a 1,2-diacyl-sn-glycero-3-phosphoethanolamine + CO2. It functions in the pathway phospholipid metabolism; phosphatidylethanolamine biosynthesis; phosphatidylethanolamine from CDP-diacylglycerol: step 2/2. Functionally, catalyzes the formation of phosphatidylethanolamine (PtdEtn) from phosphatidylserine (PtdSer). Plays a central role in phospholipid metabolism and in the interorganelle trafficking of phosphatidylserine. Phosphatidylethanolamine produced by PSD2 is insufficient to completely provide the PtdEtn pool required by mitochondria under respiratory conditions. PSD2 is also involved in the PtdSer transport step to the site of PtdEtn synthesis on the Golgi/endosome membranes. Required for normal heavy metal resistance. In Saccharomyces cerevisiae (strain ATCC 204508 / S288c) (Baker's yeast), this protein is Phosphatidylserine decarboxylase proenzyme 2.